The chain runs to 276 residues: Homeobox-leucine zipper protein HOX22 (276 aa).

Residues 70-130 constitute a DNA-binding region (homeobox); it reads AGERKRRFTE…NKRARWRSKQ (61 aa). Residues 129-173 are leucine-zipper; the sequence is KQLEHDYAALRSKYDALHSRVESLKQEKLALTVQLHELRERLRER. Residues 170 to 212 form a disordered region; the sequence is LREREERSGNGGAATTAASSSSCNGSGSEEVDDDDDKRNAAAG. The span at 182–197 shows a compositional bias: low complexity; that stretch reads AATTAASSSSCNGSGS.

The protein belongs to the HD-ZIP homeobox family. Class I subfamily. As to expression, expressed in seedlings, roots, stems, leaf sheaths and blades and panicles.

Its subcellular location is the nucleus. Its function is as follows. Probable transcription factor. In Oryza sativa subsp. japonica (Rice), this protein is Homeobox-leucine zipper protein HOX22 (HOX22).